Reading from the N-terminus, the 479-residue chain is Glycerol kinase 5 (479 aa).

Serine 20 and serine 21 together coordinate ATP. The glycerol site is built by arginine 90, aspartate 267, and glutamine 268. Threonine 289, glycine 332, and glycine 432 together coordinate ATP.

This sequence belongs to the FGGY kinase family.

It is found in the cytoplasm. It catalyses the reaction glycerol + ATP = sn-glycerol 3-phosphate + ADP + H(+). The protein operates within polyol metabolism; glycerol degradation via glycerol kinase pathway; sn-glycerol 3-phosphate from glycerol: step 1/1. Functionally, skin-specific kinase that plays a key role in glycerol metabolism, catalyzing its phosphorylation to produce sn-glycerol 3-phosphate. Involved in skin-specific regulation of sterol regulatory element-binding protein (SREBP) processing and lipid biosynthesis. The sequence is that of Glycerol kinase 5 (gk5) from Xenopus laevis (African clawed frog).